The sequence spans 296 residues: NAD kinase (296 aa).

Asp-78 functions as the Proton acceptor in the catalytic mechanism. NAD(+) is bound by residues 78–79 (DG), 152–153 (ND), Arg-180, Asp-182, and Gln-251.

This sequence belongs to the NAD kinase family. Requires a divalent metal cation as cofactor.

It is found in the cytoplasm. It catalyses the reaction NAD(+) + ATP = ADP + NADP(+) + H(+). Functionally, involved in the regulation of the intracellular balance of NAD and NADP, and is a key enzyme in the biosynthesis of NADP. Catalyzes specifically the phosphorylation on 2'-hydroxyl of the adenosine moiety of NAD to yield NADP. The chain is NAD kinase from Neisseria gonorrhoeae (strain ATCC 700825 / FA 1090).